Reading from the N-terminus, the 185-residue chain is Ribosome-recycling factor (185 aa).

This sequence belongs to the RRF family.

The protein resides in the cytoplasm. Its function is as follows. Responsible for the release of ribosomes from messenger RNA at the termination of protein biosynthesis. May increase the efficiency of translation by recycling ribosomes from one round of translation to another. This chain is Ribosome-recycling factor, found in Haemophilus influenzae (strain ATCC 51907 / DSM 11121 / KW20 / Rd).